The primary structure comprises 539 residues: CTP synthase (539 aa).

An amidoligase domain region spans residues 1–267 (MTKFIFVTGG…DDLVIKRLDL (267 aa)). A CTP-binding site is contributed by S13. S13 contributes to the UTP binding site. 14 to 19 (SLGKGI) provides a ligand contact to ATP. Residue Y54 participates in L-glutamine binding. An ATP-binding site is contributed by D71. Residues D71 and E141 each coordinate Mg(2+). CTP is bound by residues 148 to 150 (DIE), 188 to 193 (KTKPTQ), and K224. Residues 188 to 193 (KTKPTQ) and K224 each bind UTP. 240-242 (RDA) contributes to the ATP binding site. The Glutamine amidotransferase type-1 domain occupies 293-535 (TIGLVGKYVS…IEAANKYKEA (243 aa)). L-glutamine is bound at residue G355. The Nucleophile; for glutamine hydrolysis role is filled by C382. L-glutamine-binding positions include 383–386 (LGMQ), E406, and R463. Active-site residues include H508 and E510.

It belongs to the CTP synthase family. As to quaternary structure, homotetramer.

The catalysed reaction is UTP + L-glutamine + ATP + H2O = CTP + L-glutamate + ADP + phosphate + 2 H(+). The enzyme catalyses L-glutamine + H2O = L-glutamate + NH4(+). It carries out the reaction UTP + NH4(+) + ATP = CTP + ADP + phosphate + 2 H(+). The protein operates within pyrimidine metabolism; CTP biosynthesis via de novo pathway; CTP from UDP: step 2/2. With respect to regulation, allosterically activated by GTP, when glutamine is the substrate; GTP has no effect on the reaction when ammonia is the substrate. The allosteric effector GTP functions by stabilizing the protein conformation that binds the tetrahedral intermediate(s) formed during glutamine hydrolysis. Inhibited by the product CTP, via allosteric rather than competitive inhibition. Functionally, catalyzes the ATP-dependent amination of UTP to CTP with either L-glutamine or ammonia as the source of nitrogen. Regulates intracellular CTP levels through interactions with the four ribonucleotide triphosphates. The polypeptide is CTP synthase (Staphylococcus carnosus (strain TM300)).